Reading from the N-terminus, the 362-residue chain is 3-dehydroquinate synthase (362 aa).

It belongs to the archaeal-type DHQ synthase family.

The enzyme catalyses 2-amino-2,3,7-trideoxy-D-lyxo-hept-6-ulosonate + NAD(+) + H2O = 3-dehydroquinate + NH4(+) + NADH + H(+). Functionally, catalyzes the oxidative deamination and cyclization of 2-amino-3,7-dideoxy-D-threo-hept-6-ulosonic acid (ADH) to yield 3-dehydroquinate (DHQ), which is fed into the canonical shikimic pathway of aromatic amino acid biosynthesis. In Methanococcus aeolicus (strain ATCC BAA-1280 / DSM 17508 / OCM 812 / Nankai-3), this protein is 3-dehydroquinate synthase.